A 148-amino-acid polypeptide reads, in one-letter code: 3-hydroxyacyl-[acyl-carrier-protein] dehydratase FabZ (148 aa).

H48 is a catalytic residue.

This sequence belongs to the thioester dehydratase family. FabZ subfamily.

Its subcellular location is the cytoplasm. The catalysed reaction is a (3R)-hydroxyacyl-[ACP] = a (2E)-enoyl-[ACP] + H2O. Its function is as follows. Involved in unsaturated fatty acids biosynthesis. Catalyzes the dehydration of short chain beta-hydroxyacyl-ACPs and long chain saturated and unsaturated beta-hydroxyacyl-ACPs. This is 3-hydroxyacyl-[acyl-carrier-protein] dehydratase FabZ from Nitratiruptor sp. (strain SB155-2).